Consider the following 529-residue polypeptide: ATP synthase subunit alpha (529 aa).

Residue 173-180 participates in ATP binding; that stretch reads GDRQTGKT.

It belongs to the ATPase alpha/beta chains family. In terms of assembly, F-type ATPases have 2 components, CF(1) - the catalytic core - and CF(0) - the membrane proton channel. CF(1) has five subunits: alpha(3), beta(3), gamma(1), delta(1), epsilon(1). CF(0) has three main subunits: a(1), b(2) and c(9-12). The alpha and beta chains form an alternating ring which encloses part of the gamma chain. CF(1) is attached to CF(0) by a central stalk formed by the gamma and epsilon chains, while a peripheral stalk is formed by the delta and b chains.

Its subcellular location is the cell membrane. It carries out the reaction ATP + H2O + 4 H(+)(in) = ADP + phosphate + 5 H(+)(out). Its function is as follows. Produces ATP from ADP in the presence of a proton gradient across the membrane. The alpha chain is a regulatory subunit. This chain is ATP synthase subunit alpha, found in Streptomyces lividans.